We begin with the raw amino-acid sequence, 324 residues long: tRNA dimethylallyltransferase (324 aa).

17-24 (GPTASGKT) contacts ATP. Position 19–24 (19–24 (TASGKT)) interacts with substrate. Interaction with substrate tRNA stretches follow at residues 42–45 (DSAL), 166–170 (QRIQR), and 251–256 (RCVGYR).

This sequence belongs to the IPP transferase family. As to quaternary structure, monomer. Mg(2+) is required as a cofactor.

It carries out the reaction adenosine(37) in tRNA + dimethylallyl diphosphate = N(6)-dimethylallyladenosine(37) in tRNA + diphosphate. Functionally, catalyzes the transfer of a dimethylallyl group onto the adenine at position 37 in tRNAs that read codons beginning with uridine, leading to the formation of N6-(dimethylallyl)adenosine (i(6)A). This Burkholderia thailandensis (strain ATCC 700388 / DSM 13276 / CCUG 48851 / CIP 106301 / E264) protein is tRNA dimethylallyltransferase.